A 74-amino-acid polypeptide reads, in one-letter code: MQLFVRAQELHTLEVTGQETVAQIKAHVASLEGIAPEDQVLLLAGTPLEDEATLGQCGVEALSTLEVAGRMLGG.

Belongs to the ubiquitin family.

The protein is Ubiquitin-like protein FUBI (FAU) of Bos taurus (Bovine).